Reading from the N-terminus, the 140-residue chain is Large-conductance mechanosensitive channel (140 aa).

Transmembrane regions (helical) follow at residues 21 to 41 and 82 to 102; these read VGVIIGGAFGKIVESLVGDVI and GSFITVAINFMILAFIIFMMI.

This sequence belongs to the MscL family. Homopentamer.

The protein resides in the cell inner membrane. Functionally, channel that opens in response to stretch forces in the membrane lipid bilayer. May participate in the regulation of osmotic pressure changes within the cell. This is Large-conductance mechanosensitive channel from Leptothrix cholodnii (strain ATCC 51168 / LMG 8142 / SP-6) (Leptothrix discophora (strain SP-6)).